The chain runs to 145 residues: Hemoglobin subunit beta (145 aa).

The 145-residue stretch at 1–145 (MLTSEEKAAV…VANALAHRYH (145 aa)) folds into the Globin domain. Phosphothreonine is present on Thr-11. Lys-58 carries the N6-acetyllysine modification. His-62 contacts heme b. N6-acetyllysine is present on Lys-81. His-91 is a heme b binding site. At Cys-92 the chain carries S-nitrosocysteine.

This sequence belongs to the globin family. In terms of assembly, heterotetramer of two alpha chains and two beta chains. In terms of tissue distribution, red blood cells.

Its function is as follows. Involved in oxygen transport from the lung to the various peripheral tissues. The protein is Hemoglobin subunit beta (HBB) of Rangifer tarandus (Reindeer).